Consider the following 102-residue polypeptide: Large ribosomal subunit protein mL63 (102 aa).

Belongs to the mitochondrion-specific ribosomal protein mL63 family.

The protein localises to the mitochondrion. The protein is Large ribosomal subunit protein mL63 (Mrpl57) of Mus musculus (Mouse).